A 263-amino-acid polypeptide reads, in one-letter code: R-spondin-1 (263 aa).

The signal sequence occupies residues 1–20 (MRLGLCVVALVLSWTHLTIS). FU repeat units follow at residues 34–85 (AEGS…GYFD) and 91–135 (MNKC…GSSA). Disulfide bonds link cysteine 40-cysteine 47, cysteine 44-cysteine 53, cysteine 56-cysteine 75, cysteine 79-cysteine 94, cysteine 97-cysteine 105, cysteine 102-cysteine 111, cysteine 114-cysteine 125, cysteine 129-cysteine 142, cysteine 148-cysteine 190, cysteine 159-cysteine 166, and cysteine 199-cysteine 206. An N-linked (GlcNAc...) asparagine glycan is attached at asparagine 137. The 61-residue stretch at 147 to 207 (QCEMSEWSPW…RCTVRRVPCP (61 aa)) folds into the TSP type-1 domain. Residues tryptophan 153 and tryptophan 156 are each glycosylated (C-linked (Man) tryptophan). The disordered stretch occupies residues 206 to 263 (CPEGQKRRKGGQGRRENANRNLARKESKEAGAGSRRRKGQQQQQQQGTVGPLTSAGPA). Over residues 218 to 234 (GRRENANRNLARKESKE) the composition is skewed to basic and acidic residues.

Belongs to the R-spondin family. Interacts with the extracellular domain of FZD8 and LRP6. It however does not form a ternary complex with FZD8 and LRP6. Interacts with WNT1. Binds heparin. Interacts with ZNRF3; promoting indirect interaction between ZNRF3 and LGR4 and membrane clearance of ZNRF3. Interacts with LGR4, LGR5 and LGR6. Identified in a complex composed of RNF43, LGR5 and RSPO1. Interacts (via FU repeats) with KREM1. C-, and N-glycosylated. N-glycosylation at Asn-137, negatively influences its secretion and enhancing effect on Wnt/beta-catenin signaling. C-mannosylation at Trp-156 by DPY19L3 is required for its secretion and regulates the enhancing activity of Wnt signaling. As to expression, abundantly expressed in adrenal glands, ovary, testis, thyroid and trachea but not in bone marrow, spinal cord, stomach, leukocytes colon, small intestine, prostate, thymus and spleen.

It localises to the secreted. The protein localises to the nucleus. Functionally, activator of the canonical Wnt signaling pathway by acting as a ligand for LGR4-6 receptors. Upon binding to LGR4-6 (LGR4, LGR5 or LGR6), LGR4-6 associate with phosphorylated LRP6 and frizzled receptors that are activated by extracellular Wnt receptors, triggering the canonical Wnt signaling pathway to increase expression of target genes. Also regulates the canonical Wnt/beta-catenin-dependent pathway and non-canonical Wnt signaling by acting as an inhibitor of ZNRF3, an important regulator of the Wnt signaling pathway. Acts as a ligand for frizzled FZD8 and LRP6. May negatively regulate the TGF-beta pathway. Has a essential roles in ovary determination. Regulates Wnt signaling by antagonizing DKK1/KREM1-mediated internalization of LRP6 through an interaction with KREM1. This chain is R-spondin-1 (RSPO1), found in Homo sapiens (Human).